Here is a 398-residue protein sequence, read N- to C-terminus: Cysteine protease ATG4A (398 aa).

Catalysis depends on Cys77, which acts as the Nucleophile. Active-site residues include Asp279 and His281. The LIR signature appears at 393 to 396 (FEIL).

The protein belongs to the peptidase C54 family. Interacts with ATG9A; the interaction is direct.

It is found in the cytoplasm. The enzyme catalyses [protein]-C-terminal L-amino acid-glycyl-phosphatidylethanolamide + H2O = [protein]-C-terminal L-amino acid-glycine + a 1,2-diacyl-sn-glycero-3-phosphoethanolamine. With respect to regulation, inhibited by N-ethylmaleimide. Redox-regulated during autophagy since reducing conditions activate ATG4A whereas an oxidizing environment such as the presence of H(2)O(2) inhibits its activity. Functionally, cysteine protease that plays a key role in autophagy by mediating both proteolytic activation and delipidation of ATG8 family proteins. The protease activity is required for proteolytic activation of ATG8 family proteins: cleaves the C-terminal amino acid of ATG8 proteins to reveal a C-terminal glycine. Exposure of the glycine at the C-terminus is essential for ATG8 proteins conjugation to phosphatidylethanolamine (PE) and insertion to membranes, which is necessary for autophagy. Preferred substrate is GABARAPL2 followed by MAP1LC3A and GABARAP. Protease activity is also required to counteract formation of high-molecular weight conjugates of ATG8 proteins (ATG8ylation): acts as a deubiquitinating-like enzyme that removes ATG8 conjugated to other proteins, such as ATG3. In addition to the protease activity, also mediates delipidation of ATG8 family proteins. Catalyzes delipidation of PE-conjugated forms of ATG8 proteins during macroautophagy. Compared to ATG4B, the major protein for proteolytic activation of ATG8 proteins, shows weaker ability to cleave the C-terminal amino acid of ATG8 proteins, while it displays stronger delipidation activity. Involved in phagophore growth during mitophagy independently of its protease activity and of ATG8 proteins: acts by regulating ATG9A trafficking to mitochondria and promoting phagophore-endoplasmic reticulum contacts during the lipid transfer phase of mitophagy. The sequence is that of Cysteine protease ATG4A from Homo sapiens (Human).